The primary structure comprises 100 residues: RING finger protein Z (100 aa).

G2 carries the N-myristoyl glycine; by host lipid modification. The RING-type; atypical zinc finger occupies C43 to C79. The short motif at P93–P96 is the PTAP/PSAP motif element.

The protein belongs to the arenaviridae Z protein family. As to quaternary structure, interacts with protein NP; this interaction probably directs the encapsidated genome to budding sites. Interacts (via RING domain) with polymerase L; this interaction inhibits viral transcription and replication, Z partially blocks the product exit tunnel for the releasing nascent RNA product. Interacts with the glycoprotein complex; this interaction plays a role in virion budding. Interacts with host eIF4E; this interaction results in eIF4E reduced affinity for its substrate, the 5'-m7 G cap structure. Interacts (via late-budding domain) with host TSG101; this interaction is essential for budding and release of viral particles. Interacts with host RPLP0; this interaction may serve to load ribosome-like particles inside the virion. Interacts with host PML; this interaction induces PML bodies redistribution in the cytoplasm upon viral infection. Myristoylation is required for the role of RING finger protein Z in assembly and budding.

It is found in the virion. The protein localises to the host cytoplasm. The protein resides in the host perinuclear region. It localises to the host cell membrane. Functionally, plays a crucial role in virion assembly and budding. Expressed late in the virus life cycle, it acts as an inhibitor of viral transcription and RNA synthesis by interacting with the viral polymerase L. Presumably recruits the NP encapsidated genome to cellular membranes at budding sites via direct interaction with NP. Plays critical roles in the final steps of viral release by interacting with host TSG101, a member of the vacuolar protein-sorting pathway and using other cellular host proteins involved in vesicle formation pathway. The budding of the virus progeny occurs after association of protein Z with the viral glycoprotein complex SSP-GP1-GP2 at the cell periphery, step that requires myristoylation of protein Z. Also selectively represses protein production by associating with host eIF4E. In cell-based minigenome assay, has an inhibitory effect on the ribonucleoprotein machinery (vRNP), which is responsible for the replication and transcription of the viral genome. The sequence is that of RING finger protein Z from Homo sapiens (Human).